Reading from the N-terminus, the 503-residue chain is Surface lipoprotein assembly modifier (503 aa).

A signal peptide spans Met-1–Ala-34. Residues Arg-38–Asp-220 form an N-terminal domain region. The TPR repeat unit spans residues Ile-136 to Tyr-169. Positions Ser-221–Phe-503 are C-terminal probable beta barrel. 14 beta stranded membrane-spanning segments follow: residues Trp-222 to Lys-232, Leu-259 to Ser-270, Ala-275 to Gly-285, Gly-299 to Ala-308, Asp-313 to Lys-322, Ile-334 to Arg-343, Phe-348 to Arg-358, Thr-372 to Pro-382, Tyr-387 to Asp-396, Arg-410 to Glu-419, Leu-424 to Lys-434, Met-454 to Arg-463, Ile-470 to Asn-479, and Asn-493 to Phe-503.

This sequence belongs to the Slam family.

The protein resides in the cell outer membrane. Functionally, required for correct export to the cell surface of some cell outer membrane lipoproteins (tested with TpbP) upon heterologous expression in E.coli and probably also in Moraxella. The protein is Surface lipoprotein assembly modifier of Moraxella catarrhalis (Branhamella catarrhalis).